A 119-amino-acid polypeptide reads, in one-letter code: UPF0738 protein BAA_1286 (119 aa).

The protein belongs to the UPF0738 family.

This chain is UPF0738 protein BAA_1286, found in Bacillus anthracis (strain A0248).